The following is a 448-amino-acid chain: Tapasin (448 aa).

The N-terminal stretch at 1–20 (MKSLSLLLAVALGLATAVSA) is a signal peptide. Topologically, residues 21 to 414 (GPAVIECWFV…LSGPSLEDSI (394 aa)) are lumenal. Cysteine 27 and cysteine 91 are oxidised to a cystine. N-linked (GlcNAc...) asparagine glycosylation is present at asparagine 253. Residues 292–399 (PKVSLMPATL…PASGRSAEVT (108 aa)) form the Ig-like C1-type domain. Cysteine 315 and cysteine 382 are oxidised to a cystine. The helical transmembrane segment at 415 to 435 (GLFLSAFFLLGLFKALGWAAV) threads the bilayer. Over 436–448 (YLSTCKDSKKKAE) the chain is Cytoplasmic.

As to quaternary structure, heterodimer with PDIA3; disulfide-linked. Obligatory mediator for the interaction between newly assembled MHC class I molecules, calreticulin, PDIA3 and TAP. Up to 4 MHC class I/tapasin complexes bind to 1 TAP. Interacts with HLA-G-B2M complex; this interaction is required for loading of high affinity peptides. On its own or as part of MHC class I peptide loading complex, interacts with ligand-free MR1 or MR1-B2M complex, providing for stable MR1 pools ready for metabolite antigen processing.

The protein localises to the endoplasmic reticulum membrane. Functionally, involved in the association of MHC class I with transporter associated with antigen processing (TAP) and in the assembly of MHC class I with peptide (peptide loading). The chain is Tapasin (TAPBP) from Chlorocebus aethiops (Green monkey).